The following is a 228-amino-acid chain: Probable endo-1,4-beta-xylanase A (228 aa).

A signal peptide spans 1 to 18; the sequence is MVSFSYLLLACSAIGALA. N29 is a glycosylation site (N-linked (GlcNAc...) asparagine). The region spanning 40–228 is the GH11 domain; it reads AGTPSSTGWN…SSGSASITVY (189 aa). E124 acts as the Nucleophile in catalysis. The Proton donor role is filled by E215.

This sequence belongs to the glycosyl hydrolase 11 (cellulase G) family.

The protein resides in the secreted. It carries out the reaction Endohydrolysis of (1-&gt;4)-beta-D-xylosidic linkages in xylans.. It participates in glycan degradation; xylan degradation. Endo-1,4-beta-xylanase involved in the hydrolysis of xylan, a major structural heterogeneous polysaccharide found in plant biomass representing the second most abundant polysaccharide in the biosphere, after cellulose. This chain is Probable endo-1,4-beta-xylanase A (xlnA), found in Aspergillus fumigatus (strain CBS 144.89 / FGSC A1163 / CEA10) (Neosartorya fumigata).